A 514-amino-acid polypeptide reads, in one-letter code: Cobyric acid synthase (514 aa).

Residues 249–448 (LIDIAVIKLP…VHGVFDNDEI (200 aa)) enclose the GATase cobBQ-type domain. Cysteine 330 serves as the catalytic Nucleophile. Residue histidine 440 is part of the active site.

This sequence belongs to the CobB/CobQ family. CobQ subfamily.

Its pathway is cofactor biosynthesis; adenosylcobalamin biosynthesis. Catalyzes amidations at positions B, D, E, and G on adenosylcobyrinic A,C-diamide. NH(2) groups are provided by glutamine, and one molecule of ATP is hydrogenolyzed for each amidation. This chain is Cobyric acid synthase, found in Ruminiclostridium cellulolyticum (strain ATCC 35319 / DSM 5812 / JCM 6584 / H10) (Clostridium cellulolyticum).